The sequence spans 702 residues: Ribosomal RNA large subunit methyltransferase K/L (702 aa).

Positions 43-154 (LVYQSLMWSR…KETASIALDL (112 aa)) constitute a THUMP domain.

It belongs to the methyltransferase superfamily. RlmKL family.

It localises to the cytoplasm. It carries out the reaction guanosine(2445) in 23S rRNA + S-adenosyl-L-methionine = N(2)-methylguanosine(2445) in 23S rRNA + S-adenosyl-L-homocysteine + H(+). The catalysed reaction is guanosine(2069) in 23S rRNA + S-adenosyl-L-methionine = N(2)-methylguanosine(2069) in 23S rRNA + S-adenosyl-L-homocysteine + H(+). Its function is as follows. Specifically methylates the guanine in position 2445 (m2G2445) and the guanine in position 2069 (m7G2069) of 23S rRNA. The protein is Ribosomal RNA large subunit methyltransferase K/L of Escherichia coli O6:K15:H31 (strain 536 / UPEC).